A 143-amino-acid polypeptide reads, in one-letter code: Boletus edulis lectin (143 aa).

Beta-D-Gal-(1-&gt;3)-alpha-D-GalNAc-binding positions include alanine 30, serine 49–glycine 50, and histidine 72–asparagine 73. N-acetyl-alpha-D-galactosamine is bound by residues serine 49–glycine 50 and histidine 72–asparagine 73. N,N'-diacetylchitobiose is bound by residues aspartate 79–threonine 82, arginine 103, and tyrosine 114. Residues aspartate 79–threonine 82, arginine 103, and tyrosine 114 contribute to the N-acetyl-alpha-D-glucosamine site.

The protein belongs to the fungal fruit body lectin family. In terms of assembly, homotetramer.

Lectin that recognizes O-linked galactose-beta-1,3-N-acetylgalactosamine, a disaccharide (Thomsen-Friedenreich antigen or T-disaccharide), present on cell surface glycoproteins. Can also bind chitin, N,N'-diacetylchitobiose, N-acetylgalactosamine and N-acetylglucosamine. Inhibits proliferation of colon, breast and liver cancer cell lines (in vitro). The sequence is that of Boletus edulis lectin from Boletus edulis (King bolete).